The following is a 1310-amino-acid chain: MDTPPMQRSTPQRAGSPDTLELMDLLDAAAAAAEHRARVVTSSQPDDLLFGENGVMVGREHEIVSIPSVSGLQPEPRTEDVGEELTQDDYVCEDGQDLMGSPVIPLAEVFHTRFSEAGAREPTGADRSLETVSLGTKLARSPKPPMNDGETGRGTTPPFPQAFSPVSPASPVGDAAGNDQREDQRSIPRQTTRGNSPGLPSVVHRDRQTQSISGKKPGDEQAGHAHASGDGVVLQKTQRPAQGKSPKKKTLKVKVPLPARKPGGPVPGPVEQLYHVLSDSVPAKGAKADLPFETDDTRPRKHDARGITPRVPGRSSGGKPRAFLALPGRSHAPDPIEDDSPVEKKPKSREFVSSSSSSSSWGSSSEDEDDEPRRVSVGSETTGSRSGREHAPSPSNSDDSDSNDGGSTKQNIQPGYRSISGPDPRIRKTKRLAGEPGRQRQKSFSLPRSRTPIIPPVSGPLMMPDGSPWPGSAPLPSNRVRFGPSGETREGHWEDEAVRAARARYEASTEPVPLYVPELGDPARQYRALINLIYCPDRDPIAWLQNPKLTGVNSALNQFYQKLLPPGRAGTAVTGSVASPVPHVGEAMATGEALWALPHAAAAVAMSRRYDRAQKHFILQSLRRAFASMAYPEATGSSPAARISRGHPSPTTPATQTPDPQPSAAARSLSVCPPDDRLRTPRKRKSQPVESRSLLDKIRETPVADARVADDHVVSKAKRRVSEPVTITSGPVVDPPAVITMPLDGPAPNGGFRRIPRGALHTPVPSDQARKAYCTPETIARLVDDPLFPTAWRPALSFDPGALAEIAARRPGGGDRRFGPPSGVEALRRRCAWMRQIPDPEDVRLLIIYDPLPGEDINGPLESTLATDPGPSWSPSRGGLSVVLAALSNRLCLPSTHAWAGNWTGPPDVSALNARGVLLLSTRDLAFAGAVEYLGSRLASARRRLLVLDAVALERWPRDGPALSQYHVYVRAPARPDAQAVVRWPDSAVTEGLARAVFASSRTFGPASFARIETAFANLYPGEQPLCLCRGGNVAYTVCTRAGPKTRVPLSPREYRQYVLPGFDGCKDLARQSRGLGLGAADFVDEAAHSHRAANRWGLGAALRPVFLPEGRRPGAAGPEAGDVPTWARVFCRHALLEPDPAAEPLVLPPVAGRSVALYASADEARNALPPIPRVMWPPGFGAAETVLEGSDGTRFVFGHHGGSERPAETQAGRQRRTADDREHALEPDDWEVGCEDAWDSEEGGGDDGDAPGSSFGVSIVSVAPGVLRDRRVGLRPAVKVELLSSSSSSEDEDDVWGGRGGRSPPQSRG.

Disordered regions lie at residues 117 to 271 (AGAR…GPVE), 285 to 454 (GAKA…TPII), and 636 to 696 (GSSP…SLLD). The span at 341-350 (PVEKKPKSRE) shows a compositional bias: basic and acidic residues. 3 stretches are compositionally biased toward low complexity: residues 351-364 (FVSS…WGSS), 392-407 (PSPS…DGGS), and 648-666 (PSPT…SAAA). The Nuclear localization signal motif lies at 677-685 (RLRTPRKRK). S686 and S722 each carry phosphoserine; by VZV ORF66. 2 disordered regions span residues 1195-1258 (RFVF…SFGV) and 1282-1310 (ELLS…QSRG). Over residues 1217–1227 (RTADDREHALE) the composition is skewed to basic and acidic residues. The segment covering 1228 to 1250 (PDDWEVGCEDAWDSEEGGGDDGD) has biased composition (acidic residues).

Belongs to the herpesviridae ICP4 family. As to quaternary structure, interacts with IE4 and IE63. Interacts with human USF1 and SP1. Phosphorylated by ORF66 protein kinase on Ser-686 and Ser-722. Also phosphorylated by ORF47 protein kinase and by human CSNK2A1/CKII.

It is found in the host nucleus. Its subcellular location is the host cytoplasm. It localises to the virion tegument. In terms of biological role, transcriptional transactivator. May interact with and recruit specific components of the general transcription machinery to viral promoters and stabilize their formation for transcription initiation. Negatively regulates its own transcription. This immediate early (EI) protein may be necessary in virion for viral pathogenesis. The polypeptide is Major viral transcription factor ICP4 homolog (Homo sapiens (Human)).